We begin with the raw amino-acid sequence, 468 residues long: Cyclin-dependent kinase 14 (468 aa).

Phosphoserine is present on residues serine 24, serine 77, and serine 94. The interval 103-132 (KTSSAGKESPKVRRHSSPSSPTSPKFGKAD) is disordered. At serine 133 the chain carries Phosphoserine. The 285-residue stretch at 134–418 (YEKLEKLGEG…AQAALSHEYF (285 aa)) folds into the Protein kinase domain. ATP-binding positions include 140–148 (LGEGSYATV) and lysine 163. Residue aspartate 255 is the Proton acceptor of the active site. The tract at residues 448–468 (ESMRAFGKNNSYGKSLSNSKH) is disordered. Over residues 455-468 (KNNSYGKSLSNSKH) the composition is skewed to polar residues.

Belongs to the protein kinase superfamily. CMGC Ser/Thr protein kinase family. CDC2/CDKX subfamily. Found in a complex with LRP6, CCNY and CAPRIN2 during G2/M stage; CAPRIN2 functions as a scaffold for the complex by binding to CCNY via its N terminus and to CDK14 via its C terminus. Interacts with CCNY; CCNY mediates its recruitment to the plasma membrane and promotes phosphorylation of LRP6. Interacts with CCDN3 and CDKN1A. Interacts with SEPT8. Interacts with 14-3-3 proteina YWHAB, YWHAE, YWHAH and YWHAQ.

The protein resides in the cell membrane. The protein localises to the cytoplasm. It is found in the nucleus. It catalyses the reaction L-seryl-[protein] + ATP = O-phospho-L-seryl-[protein] + ADP + H(+). The catalysed reaction is L-threonyl-[protein] + ATP = O-phospho-L-threonyl-[protein] + ADP + H(+). With respect to regulation, serine/threonine-protein kinase activity is promoted by associated cyclins CCDN3 and CCNY and repressed by CDKN1A. Functionally, serine/threonine-protein kinase involved in the control of the eukaryotic cell cycle, whose activity is controlled by an associated cyclin. Acts as a cell-cycle regulator of Wnt signaling pathway during G2/M phase by mediating the phosphorylation of LRP6 at 'Ser-1490', leading to the activation of the Wnt signaling pathway. Acts as a regulator of cell cycle progression and cell proliferation via its interaction with CCDN3. Phosphorylates RB1 in vitro, however the relevance of such result remains to be confirmed in vivo. May also play a role in meiosis, neuron differentiation and may indirectly act as a negative regulator of insulin-responsive glucose transport. The polypeptide is Cyclin-dependent kinase 14 (CDK14) (Dasypus novemcinctus (Nine-banded armadillo)).